We begin with the raw amino-acid sequence, 283 residues long: Pantothenate synthetase (283 aa).

30 to 37 (MGTLHDGH) contacts ATP. Catalysis depends on H37, which acts as the Proton donor. Q61 contributes to the (R)-pantoate binding site. Residue Q61 participates in beta-alanine binding. 148–151 (GLKD) contributes to the ATP binding site. Q154 contacts (R)-pantoate. ATP is bound at residue 185-188 (MSSR).

Belongs to the pantothenate synthetase family. Homodimer.

It localises to the cytoplasm. It catalyses the reaction (R)-pantoate + beta-alanine + ATP = (R)-pantothenate + AMP + diphosphate + H(+). It participates in cofactor biosynthesis; (R)-pantothenate biosynthesis; (R)-pantothenate from (R)-pantoate and beta-alanine: step 1/1. In terms of biological role, catalyzes the condensation of pantoate with beta-alanine in an ATP-dependent reaction via a pantoyl-adenylate intermediate. In Leptospira biflexa serovar Patoc (strain Patoc 1 / Ames), this protein is Pantothenate synthetase.